Here is a 677-residue protein sequence, read N- to C-terminus: Polyunsaturated fatty acid lipoxygenase ALOX8 (677 aa).

A PLAT domain is found at 2–125 (AKCRVRVSTG…ELVLREGAAK (124 aa)). The Ca(2+) site is built by Gly-15, Gly-17, Asp-39, His-40, Gly-42, Glu-44, Asp-86, and Ala-87. Residues 126-677 (VSWQDHHPTL…PPLIENSVSI (552 aa)) enclose the Lipoxygenase domain. Fe cation contacts are provided by His-374, His-379, His-554, and Ile-677.

This sequence belongs to the lipoxygenase family. It depends on Fe cation as a cofactor. Expressed in epidermis and brain. No expression found in heart, spleen, liver, skeletal muscle, kidney or testis.

The protein resides in the cytoplasm. Its subcellular location is the cytosol. The protein localises to the membrane. It catalyses the reaction (9Z,12Z)-octadecadienoate + O2 = (9S)-hydroperoxy-(10E,12Z)-octadecadienoate. The catalysed reaction is (5Z,8Z,11Z,14Z)-eicosatetraenoate + O2 = (8S)-hydroperoxy-(5Z,9E,11Z,14Z)-eicosatetraenoate. The enzyme catalyses (15S)-hydroperoxy-(5Z,8Z,11Z,13E)-eicosatetraenoate + O2 = (8S,15S)-dihydroperoxy-(5Z,9E,11Z,13E)-eicosatetraenoate. It carries out the reaction (8S)-hydroperoxy-(5Z,9E,11Z,14Z)-eicosatetraenoate + O2 = (8S,15S)-dihydroperoxy-(5Z,9E,11Z,13E)-eicosatetraenoate. It catalyses the reaction 1-octadecanoyl-2-(5Z,8Z,11Z,14Z-eicosatetraenoyl)-sn-glycero-3-phosphocholine + O2 = 1-octadecanoyl-2-(15-hydroperoxy-5Z,8Z,11Z,13E-eicosatetraenoyl)-sn-glycero-3-phosphocholine. The catalysed reaction is a 1-acyl-2-(5Z,8Z,11Z,14Z-eicosatetraenoyl)-sn-glycero-3-phospho-(1D-myo-inositol) + O2 = a 1-acyl-2-(15-hydroperoxy-5Z,8Z,11Z,13E-eicosatetraenoyl)-sn-glycero-3-phospho-(1D-myo-inositol). The enzyme catalyses a 1-acyl-2-(8Z,11Z,14Z-eicosatrienoyl)-sn-glycero-3-phospho-(1D-myo-inositol) + O2 = a 1-acyl-2-(15-hydroperoxy-8Z,11Z,13E-eicosatrienoyl)-sn-glycero-3-phospho-(1D-myo-inositol). It carries out the reaction (5Z,8Z,11Z,14Z)-eicosatetraenoate + O2 = 9-hydroperoxy-(5Z,7E,11Z,14Z)-eicosatetraenoate. It catalyses the reaction (5Z,8Z,11Z,14Z)-eicosatetraenoate + O2 = 11-hydroperoxy-(5Z,8Z,12E,14Z)-eicosatetraenoate. The catalysed reaction is (8Z,11Z,14Z)-eicosatrienoate + O2 = 15-hydroperoxy-(8Z,11Z,13E)-eicosatrienoate. The protein operates within lipid metabolism; hydroperoxy eicosatetraenoic acid biosynthesis. Functionally, non-heme iron-containing dioxygenase that catalyzes the stereo-specific peroxidation of free and esterified polyunsaturated fatty acids generating a spectrum of bioactive lipid mediators. Catalyzes the peroxidation of arachidonate and linoleate into (8S)-HPETE and (9S)-HPODE respectively. In addition to generate (8S)-HPETE from free arachidonic acid (AA), may produce other HETE isomers from phospholipid-esterified polyunsaturated fatty acids and minor products derived from (8S)-HPETE itself that may include leukotriene A4 and 8,15-diHPETE. With free arachidonate as substrate, has no detectable 15S-lipoxygenase activity and only displays a 8S-lipoxygenase activity. However may have a 15S-lipoxygenase activity with (8S)-HPETE to produce (8S,15S)-diHPETE and when oxidizes directly arachidonic acid esterified to membrane-bound phospholipids to produce a phospholipid-esterified 15-HpETE. May also catalyze (15S)-HPETE peroxidation to produce 8,15-diHPETE. May play a role in keratinocyte differentiation through activation of the peroxisome proliferator activated receptor signaling pathway. This chain is Polyunsaturated fatty acid lipoxygenase ALOX8, found in Mus musculus (Mouse).